Reading from the N-terminus, the 675-residue chain is Methionine--tRNA ligase (675 aa).

A 'HIGH' region motif is present at residues 15-25 (PYANGSIHLGH). Residues Cys-146, Cys-149, Cys-159, and Cys-162 each contribute to the Zn(2+) site. The 'KMSKS' region signature appears at 332 to 336 (KMSKS). Lys-335 is an ATP binding site. In terms of domain architecture, tRNA-binding spans 573 to 675 (DFAKVDMRIA…SGAQPGMQVK (103 aa)).

Belongs to the class-I aminoacyl-tRNA synthetase family. MetG type 1 subfamily. In terms of assembly, homodimer. Requires Zn(2+) as cofactor.

Its subcellular location is the cytoplasm. It carries out the reaction tRNA(Met) + L-methionine + ATP = L-methionyl-tRNA(Met) + AMP + diphosphate. Is required not only for elongation of protein synthesis but also for the initiation of all mRNA translation through initiator tRNA(fMet) aminoacylation. In Yersinia pseudotuberculosis serotype O:1b (strain IP 31758), this protein is Methionine--tRNA ligase.